Reading from the N-terminus, the 1161-residue chain is Perforin-like protein 1 (1161 aa).

The helical transmembrane segment at leucine 67–valine 86 threads the bilayer. The segment at proline 154–phenylalanine 329 is disordered. Basic and acidic residues-rich tracts occupy residues threonine 162 to glutamate 177 and alanine 184 to serine 194. The segment covering proline 201–aspartate 211 has biased composition (acidic residues). Residues asparagine 222–aspartate 234 are compositionally biased toward polar residues. Positions glycine 238–serine 249 are enriched in low complexity. A glycan (N-linked (GlcNAc...) asparagine) is linked at asparagine 257. Residues asparagine 264 to lysine 283 show a composition bias toward basic residues. The span at asparagine 309–aspartate 322 shows a compositional bias: polar residues. Asparagine 344 carries an N-linked (GlcNAc...) asparagine glycan. The segment at alanine 353–serine 381 is disordered. The segment covering serine 361–proline 378 has biased composition (polar residues). An MACPF domain is found at leucine 463–threonine 817. A disulfide bond links cysteine 539 and cysteine 602. A glycan (N-linked (GlcNAc...) asparagine) is linked at asparagine 550. A beta stranded membrane pass occupies residues tyrosine 554 to serine 589. N-linked (GlcNAc...) asparagine glycosylation is present at asparagine 618. Cysteine 643 and cysteine 657 are oxidised to a cystine. Residues arginine 694–asparagine 740 form a beta stranded membrane-spanning segment. The segment at glycine 716–glutamate 736 is disordered. Asparagine 755 carries N-linked (GlcNAc...) asparagine glycosylation. Cystine bridges form between cysteine 845-cysteine 900, cysteine 874-cysteine 881, cysteine 928-cysteine 981, cysteine 957-cysteine 964, cysteine 1019-cysteine 1080, and cysteine 1047-cysteine 1054. N-linked (GlcNAc...) asparagine glycosylation is found at asparagine 1022, asparagine 1050, and asparagine 1111. Residues valine 1094–serine 1149 are disordered. Over residues glycine 1099–asparagine 1111 the composition is skewed to basic residues.

It belongs to the MPEG1 family. Homooligomer; forms a homooligomeric pore.

It is found in the parasitophorous vacuole membrane. It localises to the cytoplasmic vesicle. The protein resides in the secretory vesicle. The protein localises to the microneme membrane. In terms of biological role, pore-forming protein that promotes parasite exit from host cells: mediates formation of a pore in the parasitophorous vacuolar membrane, leading to membrane permeabilization, thereby facilitating parasite egress from host cells. May also form a pore in the host plasma membrane. Preferentially binds inner leaflet lipids, such as phosphatidylethanolamine (PE) or phosphatidylserine (PS). The sequence is that of Perforin-like protein 1 from Toxoplasma gondii (strain ATCC 50861 / VEG).